Reading from the N-terminus, the 619-residue chain is (-)-camphene synthase, chloroplastic (619 aa).

Residues 1–47 (MALVSVAPLVSMRRSLFSSPYELKSIDKTIPNLVMCRKRMSGTPSIR) constitute a chloroplast transit peptide. Positions 370, 374, and 522 each coordinate Mg(2+). Residues 370–374 (DDIYD) carry the DDXXD motif motif.

The protein belongs to the terpene synthase family. Tpsd subfamily. Mg(2+) is required as a cofactor. It depends on Mn(2+) as a cofactor.

The protein resides in the plastid. Its subcellular location is the chloroplast. The catalysed reaction is (2E)-geranyl diphosphate = (1S,4R)-camphene + diphosphate. It carries out the reaction (2E)-geranyl diphosphate = (1R,5R)-alpha-pinene + diphosphate. The enzyme catalyses (2E)-geranyl diphosphate = tricyclene + diphosphate. It catalyses the reaction (2E)-geranyl diphosphate = beta-myrcene + diphosphate. The catalysed reaction is (2E)-geranyl diphosphate = (1S,5S)-beta-pinene + diphosphate. It carries out the reaction (2E)-geranyl diphosphate = (1S,5S)-alpha-pinene + diphosphate. It participates in terpene metabolism; oleoresin biosynthesis. It functions in the pathway secondary metabolite biosynthesis; terpenoid biosynthesis. In terms of biological role, monoterpene synthase (TPS) involved in the biosynthesis of monoterpene natural products included in conifer oleoresin secretions and volatile emissions; these compounds contribute to biotic and abiotic stress defense against herbivores and pathogens. Catalyzes the conversion of (2E)-geranyl diphosphate (GPP) to (-)-camphene, (+)-alpha-pinene and (-)-alpha-pinene, and, to a lower extent, to tricyclene, myrcene and (-)-beta-pinene. The chain is (-)-camphene synthase, chloroplastic from Pinus contorta (Shore pine).